A 129-amino-acid polypeptide reads, in one-letter code: Small ribosomal subunit protein uS11 (129 aa).

The protein belongs to the universal ribosomal protein uS11 family. As to quaternary structure, part of the 30S ribosomal subunit. Interacts with proteins S7 and S18. Binds to IF-3.

Located on the platform of the 30S subunit, it bridges several disparate RNA helices of the 16S rRNA. Forms part of the Shine-Dalgarno cleft in the 70S ribosome. In Ectopseudomonas mendocina (strain ymp) (Pseudomonas mendocina), this protein is Small ribosomal subunit protein uS11.